The primary structure comprises 42 residues: Large ribosomal subunit protein bL36 (42 aa).

The protein belongs to the bacterial ribosomal protein bL36 family.

This is Large ribosomal subunit protein bL36 from Anaplasma marginale (strain St. Maries).